A 316-amino-acid chain; its full sequence is Retinol dehydrogenase 11 (316 aa).

The chain crosses the membrane as a helical; Signal-anchor for type II membrane protein span at residues 1–21; sequence MFGFLLLLSLPFILYLVTPKI. The Cytoplasmic portion of the chain corresponds to 22 to 316; it reads RKMLSSGVCT…CDLLGLPVDW (295 aa). 45–51 is a binding site for NADP(+); the sequence is GANTGIG. An N6-acetyllysine modification is found at Lys109. Residue Ser174 coordinates substrate. The active-site Proton acceptor is Tyr199.

Belongs to the short-chain dehydrogenases/reductases (SDR) family. Post-translationally, not glycosylated. As to expression, expressed at high level in liver and testis. Expressed at lower levels in smooth muscle, thymus, submaxillary gland and epididymis. In testis, expression is restricted to pachytene spermatocytes. Also expressed in four layers of the retina, including the outer segment of rods and cones.

The protein resides in the endoplasmic reticulum membrane. The catalysed reaction is all-trans-retinol + NADP(+) = all-trans-retinal + NADPH + H(+). It catalyses the reaction 11-cis-retinol + NADP(+) = 11-cis-retinal + NADPH + H(+). The enzyme catalyses 9-cis-retinol + NADP(+) = 9-cis-retinal + NADPH + H(+). It carries out the reaction 13-cis-retinol + NADP(+) = 13-cis-retinal + NADPH + H(+). The catalysed reaction is a medium-chain primary fatty alcohol + NADP(+) = a medium-chain fatty aldehyde + NADPH + H(+). It catalyses the reaction (2E,6Z)-nona-2,6-dien-1-ol + NADP(+) = (2E,6Z)-nona-2,6-dienal + NADPH + H(+). The enzyme catalyses (E)-oct-2-en-1-ol + NADP(+) = (2E)-octenal + NADPH + H(+). It carries out the reaction (E)-non-2-en-1-ol + NADP(+) = (E)-non-2-enal + NADPH + H(+). The catalysed reaction is heptan-1-ol + NADP(+) = heptanal + NADPH + H(+). It catalyses the reaction hexan-1-ol + NADP(+) = hexanal + NADPH + H(+). The enzyme catalyses decan-1-ol + NADP(+) = decanal + NADPH + H(+). It carries out the reaction nonan-1-ol + NADP(+) = nonanal + NADPH + H(+). The catalysed reaction is octan-1-ol + NADP(+) = octanal + NADPH + H(+). It catalyses the reaction (Z)-non-6-en-1-ol + NADP(+) = (Z)-non-6-enal + NADPH + H(+). Its pathway is cofactor metabolism; retinol metabolism. Functionally, retinol dehydrogenase with a clear preference for NADP. Displays high activity towards 9-cis, 11-cis and all-trans-retinol, and to a lesser extent on 13-cis-retinol. Also exhibits reductive activity towards toxic lipid peroxidation products such as medium-chain aldehydes trans-2-nonenal, nonanal, and cis-6-nonenal. Has no dehydrogenase activity towards steroid. Seems to be required for homeostasis of retinol in liver and testis. The chain is Retinol dehydrogenase 11 (Rdh11) from Mus musculus (Mouse).